Here is a 421-residue protein sequence, read N- to C-terminus: Histone-lysine N-methyltransferase SUV39H1 (421 aa).

The Chromo domain occupies 46–104 (FEVEYLWNYKKVQDQELYLVKWKYYPDSESTWEPRHHLKCNNLLKQFHLDLERELLRRA). Positions 189–249 (AGCKCRDCFS…SCPNRVVQKG (61 aa)) constitute a Pre-SET domain. The Zn(2+) site is built by Cys-191, Cys-193, Cys-196, Cys-203, Cys-204, Cys-231, Cys-235, Cys-237, and Cys-241. Positions 252-375 (YKFCIFRTSD…TGEELTFDYN (124 aa)) constitute an SET domain. S-adenosyl-L-methionine contacts are provided by residues 263-265 (RGW), Tyr-306, and 332-333 (NH). Cys-335, Cys-409, Cys-411, and Cys-416 together coordinate Zn(2+). The Post-SET domain maps to 405 to 421 (VRVECKCGVSSCRKYLF).

The protein belongs to the class V-like SAM-binding methyltransferase superfamily. Histone-lysine methyltransferase family. Suvar3-9 subfamily.

The protein localises to the nucleus. Its subcellular location is the chromosome. It is found in the centromere. It carries out the reaction L-lysyl(9)-[histone H3] + 3 S-adenosyl-L-methionine = N(6),N(6),N(6)-trimethyl-L-lysyl(9)-[histone H3] + 3 S-adenosyl-L-homocysteine + 3 H(+). In terms of biological role, histone methyltransferase that specifically trimethylates 'Lys-9' of histone H3 using monomethylated H3 'Lys-9' as substrate. H3 'Lys-9' trimethylation represents a specific tag for epigenetic transcriptional repression by recruiting HP1 (CBX1, CBX3 and/or CBX5) proteins to methylated histones. Mainly functions in heterochromatin regions, thereby playing a central role in the establishment of constitutive heterochromatin at pericentric and telomere regions. H3 'Lys-9' trimethylation is also required to direct DNA methylation at pericentric repeats. SUV39H1 is targeted to histone H3 via its interaction with RB1 and is involved in many processes. This Xenopus laevis (African clawed frog) protein is Histone-lysine N-methyltransferase SUV39H1 (suv39h1).